A 426-amino-acid polypeptide reads, in one-letter code: Tryptophan--tRNA ligase (426 aa).

A 'HIGH' region motif is present at residues 66–74 (PSGEMHLGN). Residues 314–318 (KMSSS) carry the 'KMSKS' region motif.

This sequence belongs to the class-I aminoacyl-tRNA synthetase family.

The protein localises to the cytoplasm. It catalyses the reaction tRNA(Trp) + L-tryptophan + ATP = L-tryptophyl-tRNA(Trp) + AMP + diphosphate + H(+). The polypeptide is Tryptophan--tRNA ligase (Thermoplasma acidophilum (strain ATCC 25905 / DSM 1728 / JCM 9062 / NBRC 15155 / AMRC-C165)).